The primary structure comprises 149 residues: MPNETKRERLRELGALNARPEAVRAPWFRESTFFDPLDLVQVKYEMLRHVQEDGVNKADAAALFGLSRPTYYQAEAAFERDGIAGLLPRTRGPKSAHKLTDEVMQLIEQNQHAGAPLQARSLAELLHSTLGISVHPRSIERAIARKKKR.

This sequence to Rhizobium NGR234A y4oM.

This is an uncharacterized protein from Sinorhizobium fredii (strain NBRC 101917 / NGR234).